A 219-amino-acid chain; its full sequence is MSIQVFCDFDGTITNNDNIMSIMEKFAPPEAEEIKQKILSQELSIQEGVSQLFRLIPINLHDDIIQFLQETAEIRTGFHEFIQFINENNISFYVISGGMDFFVYPLLQEIIPKEQIYCNATDFSGEFVEVKWPHPCDEQCQHSCGLCKSSLIRKLSSKDDFHIVIGDSITDLQATKQADKVFARDFLITKCEENRIAYTPFETFHDVLAELKHLLEVKL.

This sequence belongs to the HAD-like hydrolase superfamily. MtnX family.

The catalysed reaction is 2-hydroxy-5-methylsulfanyl-3-oxopent-1-enyl phosphate + H2O = 1,2-dihydroxy-5-(methylsulfanyl)pent-1-en-3-one + phosphate. Its pathway is amino-acid biosynthesis; L-methionine biosynthesis via salvage pathway; L-methionine from S-methyl-5-thio-alpha-D-ribose 1-phosphate: step 4/6. Functionally, dephosphorylates 2-hydroxy-3-keto-5-methylthiopentenyl-1-phosphate (HK-MTPenyl-1-P) yielding 1,2-dihydroxy-3-keto-5-methylthiopentene (DHK-MTPene). The polypeptide is 2-hydroxy-3-keto-5-methylthiopentenyl-1-phosphate phosphatase (Bacillus mycoides (strain KBAB4) (Bacillus weihenstephanensis)).